The following is a 284-amino-acid chain: Origin of replication complex subunit 6 (284 aa).

Belongs to the ORC6 family. In terms of assembly, component of the origin recognition complex (ORC) composed of at least ORC1 (ORC1A or ORC1B), ORC2, ORC3, ORC4, ORC5 and ORC6. ORC is regulated in a cell-cycle and development dependent manner. It is sequentially assembled at the exit from anaphase of mitosis and disassembled as cells enter S phase. Interacts directly with ORC2, ORC3, ORC4 and ORC5. In terms of tissue distribution, follow a cell-cycle regulation with a peak at the G1/S-phase. Mostly expressed in siliques, flowers, flower buds and mature leaves, and, to a lower exent, in roots, leaves and stems.

It localises to the nucleus. Functionally, component of the origin recognition complex (ORC) that binds origins of replication. DNA-binding is ATP-dependent. The specific DNA sequences that define origins of replication have not been identified yet. ORC is required to assemble the pre-replication complex necessary to initiate DNA replication. This is Origin of replication complex subunit 6 from Arabidopsis thaliana (Mouse-ear cress).